The primary structure comprises 387 residues: S-adenosylmethionine synthase (387 aa).

His17 contacts ATP. Asp19 provides a ligand contact to Mg(2+). Glu45 lines the K(+) pocket. Residues Glu58 and Gln101 each coordinate L-methionine. The tract at residues 101–111 (QSPDIAQGVDR) is flexible loop. Residues 168 to 170 (DAK), 234 to 235 (RF), Asp243, 249 to 250 (RK), Ala266, and Lys270 each bind ATP. Asp243 is an L-methionine binding site. Residue Lys274 coordinates L-methionine.

Belongs to the AdoMet synthase family. As to quaternary structure, homotetramer; dimer of dimers. Requires Mg(2+) as cofactor. K(+) serves as cofactor.

The protein resides in the cytoplasm. The enzyme catalyses L-methionine + ATP + H2O = S-adenosyl-L-methionine + phosphate + diphosphate. It participates in amino-acid biosynthesis; S-adenosyl-L-methionine biosynthesis; S-adenosyl-L-methionine from L-methionine: step 1/1. Its function is as follows. Catalyzes the formation of S-adenosylmethionine (AdoMet) from methionine and ATP. The overall synthetic reaction is composed of two sequential steps, AdoMet formation and the subsequent tripolyphosphate hydrolysis which occurs prior to release of AdoMet from the enzyme. The sequence is that of S-adenosylmethionine synthase from Bordetella bronchiseptica (strain ATCC BAA-588 / NCTC 13252 / RB50) (Alcaligenes bronchisepticus).